A 367-amino-acid polypeptide reads, in one-letter code: Alanine racemase (367 aa).

Catalysis depends on Lys40, which acts as the Proton acceptor; specific for D-alanine. Position 40 is an N6-(pyridoxal phosphate)lysine (Lys40). Substrate is bound at residue Arg136. Tyr263 serves as the catalytic Proton acceptor; specific for L-alanine. Met310 is a substrate binding site.

It belongs to the alanine racemase family. Pyridoxal 5'-phosphate serves as cofactor.

It carries out the reaction L-alanine = D-alanine. Its pathway is amino-acid biosynthesis; D-alanine biosynthesis; D-alanine from L-alanine: step 1/1. Functionally, catalyzes the interconversion of L-alanine and D-alanine. May also act on other amino acids. The polypeptide is Alanine racemase (alr) (Streptococcus pneumoniae (strain Taiwan19F-14)).